An 838-amino-acid chain; its full sequence is Ribonucleoside-diphosphate reductase large subunit (838 aa).

The region spanning 6–97 (KLVTKRDGSV…VTALHKTTTE (92 aa)) is the ATP-cone domain. ATP-binding positions include 10-11 (KR), 16-22 (EPYDEKV), Thr58, and Asp62. Ser227 contacts GDP. Cys228 and Cys454 are disulfide-bonded. Residues 236-238 (DSI), Lys253, Arg266, and 273-274 (AG) each bind dTTP. GDP is bound at residue Asn437. Asn437 functions as the Proton acceptor in the catalytic mechanism. Cys439 serves as the catalytic Cysteine radical intermediate. Residues Glu441 and 626–629 (TAST) contribute to the GDP site. The active-site Proton acceptor is the Glu441. A compositionally biased stretch (basic and acidic residues) spans 780-794 (KELPKPDKQSKEEVH). The disordered stretch occupies residues 780–838 (KELPKPDKQSKEEVHGSVGRGKRKRVGEKPTANHSNAGAPNLNGPPDTDGDGGCLNCGS).

The protein belongs to the ribonucleoside diphosphate reductase large chain family. As to quaternary structure, heterodimer of a large and a small subunit.

It carries out the reaction a 2'-deoxyribonucleoside 5'-diphosphate + [thioredoxin]-disulfide + H2O = a ribonucleoside 5'-diphosphate + [thioredoxin]-dithiol. The catalysed reaction is dCDP + [thioredoxin]-disulfide + H2O = CDP + [thioredoxin]-dithiol. With respect to regulation, under complex allosteric control mediated by deoxynucleoside triphosphates and ATP binding to separate specificity and activation sites on the large subunit. The type of nucleotide bound at the specificity site determines substrate preference. It seems probable that ATP makes the enzyme reduce CDP and UDP, dGTP favors ADP reduction and dTTP favors GDP reduction. Stimulated by ATP and inhibited by dATP binding to the activity site. In terms of biological role, provides the precursors necessary for DNA synthesis. Catalyzes the rate limiting step in the de novo synthesis of deoxyribonucleotides by directly reducing ribonucleotides to the corresponding deoxyribonucleotides. This Trypanosoma brucei brucei protein is Ribonucleoside-diphosphate reductase large subunit (RNR1).